The sequence spans 679 residues: Glycine--tRNA ligase beta subunit (679 aa).

The protein belongs to the class-II aminoacyl-tRNA synthetase family. In terms of assembly, tetramer of two alpha and two beta subunits.

The protein localises to the cytoplasm. It carries out the reaction tRNA(Gly) + glycine + ATP = glycyl-tRNA(Gly) + AMP + diphosphate. This Streptococcus pyogenes serotype M49 (strain NZ131) protein is Glycine--tRNA ligase beta subunit.